Consider the following 230-residue polypeptide: MFRLKELQKKQQQQQQQQQQAAAPATNGTDAVTTEPTDVKRQNSNDLKEIRKQKSKDSYFSLKTKQSSESGSKRANPAELRAQKDIDEMEVPTGCAVSFKDTNDILNFNLSITPTDGLYQSATFQFTINIPSTYPYDPPKVHCDTLVYHPNIDLEGHVCLNILRQDWMPVLNIGTVIFGLMTLFLEPNPDDPLNKDAAQLMIDNKKTFEANVRQSLRGGYISNRQFPKLL.

Positions Met-1–Asp-87 are disordered. Positions Lys-10–Gln-20 are enriched in low complexity. Over residues Thr-26–Pro-36 the composition is skewed to polar residues. Residues Thr-37–Asp-57 show a composition bias toward basic and acidic residues. Residues Ser-61–Ser-70 are compositionally biased toward polar residues. Residues Pro-77–Ile-221 enclose the UBC core domain. Cys-159 (glycyl thioester intermediate) is an active-site residue.

Belongs to the ubiquitin-conjugating enzyme family. UBC12 subfamily.

The enzyme catalyses [E1 NEDD8-activating enzyme]-S-[NEDD8 protein]-yl-L-cysteine + [E2 NEDD8-conjugating enzyme]-L-cysteine = [E1 NEDD8-activating enzyme]-L-cysteine + [E2 NEDD8-conjugating enzyme]-S-[NEDD8-protein]-yl-L-cysteine.. The protein operates within protein modification; protein neddylation. Accepts the ubiquitin-like protein nedd8 from the uba3-nae1 E1 complex and catalyzes its covalent attachment to other proteins. In Dictyostelium discoideum (Social amoeba), this protein is NEDD8-conjugating enzyme Ubc12 (ube2m).